The primary structure comprises 264 residues: MQKLKLHGFNNLTKSLSFCIYDICYAKTADDRDGYITYIDEQYNANRLTEILSETCSMIGANILNIARQDYEPQGASVTILVSEEPVDPGSIDTSEHPGPLPESVVAHLDKSHICVHTYPESHPEGGLCTFRADIEVSTCGVISPLKALNYLIHQLESDIVTMDYRVRGFTRDINGVKHYIDHEINSIQNFMSKDMKALYHMMDVNVYQENIFHTKIMLKDFDLKHYLFNARPDDLSAEERKAITDLLYKEMQEIYYGRNLPVL.

Ser-112 (schiff-base intermediate with substrate; via pyruvic acid) is an active-site residue. Ser-112 carries the post-translational modification Pyruvic acid (Ser); by autocatalysis. Catalysis depends on His-117, which acts as the Proton acceptor; for processing activity. Cys-140 serves as the catalytic Proton donor; for catalytic activity.

This sequence belongs to the prokaryotic AdoMetDC family. Type 2 subfamily. Heterooctamer of four alpha and four beta chains arranged as a tetramer of alpha/beta heterodimers. It depends on pyruvate as a cofactor. Post-translationally, is synthesized initially as an inactive proenzyme. Formation of the active enzyme involves a self-maturation process in which the active site pyruvoyl group is generated from an internal serine residue via an autocatalytic post-translational modification. Two non-identical subunits are generated from the proenzyme in this reaction, and the pyruvate is formed at the N-terminus of the alpha chain, which is derived from the carboxyl end of the proenzyme. The post-translation cleavage follows an unusual pathway, termed non-hydrolytic serinolysis, in which the side chain hydroxyl group of the serine supplies its oxygen atom to form the C-terminus of the beta chain, while the remainder of the serine residue undergoes an oxidative deamination to produce ammonia and the pyruvoyl group blocking the N-terminus of the alpha chain.

The catalysed reaction is S-adenosyl-L-methionine + H(+) = S-adenosyl 3-(methylsulfanyl)propylamine + CO2. It participates in amine and polyamine biosynthesis; S-adenosylmethioninamine biosynthesis; S-adenosylmethioninamine from S-adenosyl-L-methionine: step 1/1. Catalyzes the decarboxylation of S-adenosylmethionine to S-adenosylmethioninamine (dcAdoMet), the propylamine donor required for the synthesis of the polyamines spermine and spermidine from the diamine putrescine. This Sodalis glossinidius (strain morsitans) protein is S-adenosylmethionine decarboxylase proenzyme.